Here is a 647-residue protein sequence, read N- to C-terminus: ATP-binding protein Uup (647 aa).

ABC transporter domains follow at residues 1–253 and 320–546; these read MALI…RVEA and FEME…AKAK. Residues 36 to 43 and 352 to 359 each bind ATP; these read GRNGAGKS and GPNGCGKT. Positions 545-563 are enriched in basic and acidic residues; the sequence is AKKSEPLKEESAVKNDRTS. The interval 545 to 569 is disordered; sequence AKKSEPLKEESAVKNDRTSKPKSVK. A C-terminal domain (CTD), binds DNA region spans residues 559–647; it reads NDRTSKPKSV…EKKNLVEGKA (89 aa).

Belongs to the ABC transporter superfamily. ABCF family. Uup subfamily.

Its subcellular location is the cytoplasm. The catalysed reaction is ATP + H2O = ADP + phosphate + H(+). In terms of biological role, probably plays a role in ribosome assembly or function. May be involved in resolution of branched DNA intermediates that result from template switching in postreplication gaps. Binds DNA and has ATPase activity. This Haemophilus influenzae (strain ATCC 51907 / DSM 11121 / KW20 / Rd) protein is ATP-binding protein Uup.